The chain runs to 269 residues: MSGIDAKKIRTRHIHEAKANGTKISVLTSYDAMTAAIFDEAGIDMLLVGDSAANVVLGRETTLSITLDEMIVLAKAVTIAAKRALVIVDLPFGTYEVSEQQAVESAVRVMRETGAAAVKIEGGVEMASTIRRIVDAGIPVCGHIGFTPQSEHALGGPVVQGRGSGADKLLADAHAVQAAGAFAVVLEMVPAEIATEVTNQLDIATIGIGAGNGTDGQVLVWQDAFGFNRGRKPRFVREYATLGDQLLEAARAYADEVGSGAFPGEVESY.

Positions 50 and 89 each coordinate Mg(2+). Residues 50 to 51, Asp-89, and Lys-119 contribute to the 3-methyl-2-oxobutanoate site; that span reads DS. Glu-121 serves as a coordination point for Mg(2+). Glu-187 (proton acceptor) is an active-site residue.

It belongs to the PanB family. In terms of assembly, homodecamer; pentamer of dimers. Mg(2+) is required as a cofactor.

The protein localises to the cytoplasm. The catalysed reaction is 3-methyl-2-oxobutanoate + (6R)-5,10-methylene-5,6,7,8-tetrahydrofolate + H2O = 2-dehydropantoate + (6S)-5,6,7,8-tetrahydrofolate. It functions in the pathway cofactor biosynthesis; (R)-pantothenate biosynthesis; (R)-pantoate from 3-methyl-2-oxobutanoate: step 1/2. Its function is as follows. Catalyzes the reversible reaction in which hydroxymethyl group from 5,10-methylenetetrahydrofolate is transferred onto alpha-ketoisovalerate to form ketopantoate. The sequence is that of 3-methyl-2-oxobutanoate hydroxymethyltransferase from Corynebacterium efficiens (strain DSM 44549 / YS-314 / AJ 12310 / JCM 11189 / NBRC 100395).